The following is a 142-amino-acid chain: Putative transmembrane protein INAFM1 (142 aa).

Positions 1-19 are enriched in gly residues; the sequence is MRGTSCVGGGAESPGGAGL. Residues 1-22 are disordered; that stretch reads MRGTSCVGGGAESPGGAGLSEG. A helical membrane pass occupies residues 36–56; the sequence is YFLCVSLAAVLLAVYYGLIWV. Disordered regions lie at residues 61-83 and 99-142; these read PAAP…PGVP and VPGG…RRPG. Residues 64 to 83 show a composition bias toward pro residues; that stretch reads PAGPQPSAPSPPCAARPGVP. Low complexity predominate over residues 99–111; that stretch reads VPGGPRPQLQLPL. Positions 117 to 142 are enriched in basic and acidic residues; sequence YSDPDRRPSRQTPRETPEAAEGRRPG.

It localises to the membrane. This Homo sapiens (Human) protein is Putative transmembrane protein INAFM1.